Consider the following 414-residue polypeptide: Nuclear hormone receptor family member nhr-213 (414 aa).

A DNA-binding region (nuclear receptor) is located at residues 21 to 99 (IVLCKVCALS…LGMTPENVQF (79 aa)). 2 consecutive NR C4-type zinc fingers follow at residues 24 to 44 (CKVC…CRAC) and 62 to 82 (CKKG…CRLC). Residues 162-414 (SAAKKMNSLE…DFSDPDIFDC (253 aa)) enclose the NR LBD domain.

The protein belongs to the nuclear hormone receptor family.

It is found in the nucleus. Orphan nuclear receptor. The polypeptide is Nuclear hormone receptor family member nhr-213 (nhr-213) (Caenorhabditis elegans).